Consider the following 276-residue polypeptide: Nuclear egress protein 2 (276 aa).

Residues 1 to 253 (MAGMGKPYGG…LFRAPRPGPP (253 aa)) are Perinuclear space-facing. A compositionally biased stretch (low complexity) spans 212–225 (HSSGAPGPGVAASG). The segment at 212-237 (HSSGAPGPGVAASGPPAPPGRGPARP) is disordered. A helical membrane pass occupies residues 254 to 274 (ALLLLAAGLFLGAAIWWAVGA). Over 275–276 (RL) the chain is Nuclear.

Belongs to the herpesviridae NEC2 protein family. In terms of assembly, forms a heterohexameric complex with NEC1. In terms of processing, phosphorylated.

Its subcellular location is the host nucleus inner membrane. Plays an essential role in virion nuclear egress, the first step of virion release from infected cell. Within the host nucleus, NEC1 interacts with the newly formed capsid through the vertexes and directs it to the inner nuclear membrane by associating with NEC2. Induces the budding of the capsid at the inner nuclear membrane as well as its envelopment into the perinuclear space. There, the NEC1/NEC2 complex promotes the fusion of the enveloped capsid with the outer nuclear membrane and the subsequent release of the viral capsid into the cytoplasm where it will reach the secondary budding sites in the host Golgi or trans-Golgi network. The chain is Nuclear egress protein 2 from Homo sapiens (Human).